A 407-amino-acid chain; its full sequence is Peptidase T (407 aa).

His-77 provides a ligand contact to Zn(2+). Asp-79 is an active-site residue. Position 138 (Asp-138) interacts with Zn(2+). Glu-172 functions as the Proton acceptor in the catalytic mechanism. Zn(2+) is bound by residues Glu-173, Asp-195, and His-377.

It belongs to the peptidase M20B family. Zn(2+) serves as cofactor.

The protein resides in the cytoplasm. It catalyses the reaction Release of the N-terminal residue from a tripeptide.. Its function is as follows. Cleaves the N-terminal amino acid of tripeptides. This is Peptidase T from Aeromonas salmonicida (strain A449).